Reading from the N-terminus, the 189-residue chain is GTP cyclohydrolase 1 (189 aa).

Residues Cys76, His79, and Cys149 each coordinate Zn(2+).

Belongs to the GTP cyclohydrolase I family. Homomer.

It catalyses the reaction GTP + H2O = 7,8-dihydroneopterin 3'-triphosphate + formate + H(+). The protein operates within cofactor biosynthesis; 7,8-dihydroneopterin triphosphate biosynthesis; 7,8-dihydroneopterin triphosphate from GTP: step 1/1. This is GTP cyclohydrolase 1 from Dehalococcoides mccartyi (strain ATCC BAA-2100 / JCM 16839 / KCTC 5957 / BAV1).